The following is a 268-amino-acid chain: Undecaprenyl-diphosphatase (268 aa).

Transmembrane regions (helical) follow at residues 47–67 (FAVL…FVKL), 83–103 (FVIG…AFGG), 109–129 (LFNP…LLWV), 144–164 (FPLL…IPGV), 184–204 (AAEF…VYDL), 217–237 (IIVA…VKTF), and 248–268 (LFAW…ALGL).

Belongs to the UppP family.

It localises to the cell inner membrane. The catalysed reaction is di-trans,octa-cis-undecaprenyl diphosphate + H2O = di-trans,octa-cis-undecaprenyl phosphate + phosphate + H(+). Catalyzes the dephosphorylation of undecaprenyl diphosphate (UPP). Confers resistance to bacitracin. The protein is Undecaprenyl-diphosphatase of Rhodopseudomonas palustris (strain ATCC BAA-98 / CGA009).